A 156-amino-acid chain; its full sequence is ATP synthase subunit b (156 aa).

The chain crosses the membrane as a helical span at residues 7–26; that stretch reads LIGQLIAFALFVAFCMKYVW.

The protein belongs to the ATPase B chain family. In terms of assembly, F-type ATPases have 2 components, F(1) - the catalytic core - and F(0) - the membrane proton channel. F(1) has five subunits: alpha(3), beta(3), gamma(1), delta(1), epsilon(1). F(0) has three main subunits: a(1), b(2) and c(10-14). The alpha and beta chains form an alternating ring which encloses part of the gamma chain. F(1) is attached to F(0) by a central stalk formed by the gamma and epsilon chains, while a peripheral stalk is formed by the delta and b chains.

Its subcellular location is the cell inner membrane. In terms of biological role, f(1)F(0) ATP synthase produces ATP from ADP in the presence of a proton or sodium gradient. F-type ATPases consist of two structural domains, F(1) containing the extramembraneous catalytic core and F(0) containing the membrane proton channel, linked together by a central stalk and a peripheral stalk. During catalysis, ATP synthesis in the catalytic domain of F(1) is coupled via a rotary mechanism of the central stalk subunits to proton translocation. Functionally, component of the F(0) channel, it forms part of the peripheral stalk, linking F(1) to F(0). This Haemophilus ducreyi (strain 35000HP / ATCC 700724) protein is ATP synthase subunit b.